The sequence spans 240 residues: MLSLVMKILRKPKIEDIVCNIQNNEEDKEAFIVQYQPFIRKSISSVCRRYITEQDDEYSIGLFAFNEAIEQYSYKKGKSFLAFADLLIKRDVIDYIRKESKHNLVFLKEDEQEEMLEMQVSLTEYMKEIENGNRKEEILHFQSVLADFKITFSELAKESPKHRDTREHLIEIVKVIIKEEEMMEELFRKKKLPLKHIEPRVRVSRKTLERHRKYIIAMCIIFANNYTYILDYIRGGKHDE.

Residues aspartate 56–isoleucine 69 carry the Polymerase core binding motif. Residues leucine 194–lysine 213 constitute a DNA-binding region (H-T-H motif).

Belongs to the sigma-70 factor family. SigI subfamily. Interacts with RsgI.

It is found in the cytoplasm. Negatively regulated by the anti-sigma-I factor RsgI. In terms of biological role, sigma factors are initiation factors that promote the attachment of RNA polymerase to specific initiation sites and are then released. This sigma factor contributes to both stress response and virulence gene expression. The sequence is that of RNA polymerase sigma factor SigI from Bacillus anthracis.